Consider the following 168-residue polypeptide: ATP synthase subunit b (168 aa).

Residues 7–26 form a helical membrane-spanning segment; sequence FVLSNFIFTLINLWIMYWVL.

It belongs to the ATPase B chain family. As to quaternary structure, F-type ATPases have 2 components, F(1) - the catalytic core - and F(0) - the membrane proton channel. F(1) has five subunits: alpha(3), beta(3), gamma(1), delta(1), epsilon(1). F(0) has three main subunits: a(1), b(2) and c(10-14). The alpha and beta chains form an alternating ring which encloses part of the gamma chain. F(1) is attached to F(0) by a central stalk formed by the gamma and epsilon chains, while a peripheral stalk is formed by the delta and b chains.

Its subcellular location is the cell membrane. F(1)F(0) ATP synthase produces ATP from ADP in the presence of a proton or sodium gradient. F-type ATPases consist of two structural domains, F(1) containing the extramembraneous catalytic core and F(0) containing the membrane proton channel, linked together by a central stalk and a peripheral stalk. During catalysis, ATP synthesis in the catalytic domain of F(1) is coupled via a rotary mechanism of the central stalk subunits to proton translocation. In terms of biological role, component of the F(0) channel, it forms part of the peripheral stalk, linking F(1) to F(0). The sequence is that of ATP synthase subunit b from Alkaliphilus metalliredigens (strain QYMF).